We begin with the raw amino-acid sequence, 256 residues long: MLEFYGQKFESRLLLGTAQYPSPAILADAVRASQSDIVTVSLRRESGEARAGQDFWALIRELGVAVLPNTAGCHTPREAVTTAKMAREIFGTNWIKLEVIGDTDTLQPDPFGLVEAARALCDDGFEVFPYMNDDLVVAERLIEAGCKVLMPWGAPIGSGRGLNNPYALKTMRAHFPDIPLVVDAGIGVPSHAAAAMELGYDAVLINTAVAKAGDPVAMARGFALAVEAGRLAFEADAIEARDMAAPSTPLLGKAFL.

Catalysis depends on Lys96, which acts as the Schiff-base intermediate with DXP. Residues Gly157, 184-185, and 206-207 contribute to the 1-deoxy-D-xylulose 5-phosphate site; these read AG and NT.

Belongs to the ThiG family. In terms of assembly, homotetramer. Forms heterodimers with either ThiH or ThiS.

The protein resides in the cytoplasm. It catalyses the reaction [ThiS sulfur-carrier protein]-C-terminal-Gly-aminoethanethioate + 2-iminoacetate + 1-deoxy-D-xylulose 5-phosphate = [ThiS sulfur-carrier protein]-C-terminal Gly-Gly + 2-[(2R,5Z)-2-carboxy-4-methylthiazol-5(2H)-ylidene]ethyl phosphate + 2 H2O + H(+). Its pathway is cofactor biosynthesis; thiamine diphosphate biosynthesis. In terms of biological role, catalyzes the rearrangement of 1-deoxy-D-xylulose 5-phosphate (DXP) to produce the thiazole phosphate moiety of thiamine. Sulfur is provided by the thiocarboxylate moiety of the carrier protein ThiS. In vitro, sulfur can be provided by H(2)S. The protein is Thiazole synthase of Brucella anthropi (strain ATCC 49188 / DSM 6882 / CCUG 24695 / JCM 21032 / LMG 3331 / NBRC 15819 / NCTC 12168 / Alc 37) (Ochrobactrum anthropi).